The primary structure comprises 197 residues: Imidazoleglycerol-phosphate dehydratase (197 aa).

Belongs to the imidazoleglycerol-phosphate dehydratase family.

The protein resides in the cytoplasm. The catalysed reaction is D-erythro-1-(imidazol-4-yl)glycerol 3-phosphate = 3-(imidazol-4-yl)-2-oxopropyl phosphate + H2O. It participates in amino-acid biosynthesis; L-histidine biosynthesis; L-histidine from 5-phospho-alpha-D-ribose 1-diphosphate: step 6/9. The polypeptide is Imidazoleglycerol-phosphate dehydratase (Pseudomonas fluorescens (strain SBW25)).